The following is a 593-amino-acid chain: Glutamate decarboxylase 1 (593 aa).

Positions 1-12 (MASSTPSPATSS) are enriched in low complexity. Positions 1 to 22 (MASSTPSPATSSNAGADPNTTN) are disordered. At Ser77 the chain carries Phosphoserine. A 4-aminobutanoate-binding site is contributed by 189–191 (QLS). The residue at position 404 (Lys404) is an N6-(pyridoxal phosphate)lysine. Arg566 provides a ligand contact to 4-aminobutanoate.

The protein belongs to the group II decarboxylase family. As to quaternary structure, homodimer. Requires pyridoxal 5'-phosphate as cofactor. In terms of tissue distribution, expressed in brain and pancreatic islets.

The catalysed reaction is L-glutamate + H(+) = 4-aminobutanoate + CO2. In terms of biological role, catalyzes the synthesis of the inhibitory neurotransmitter gamma-aminobutyric acid (GABA) with pyridoxal 5'-phosphate as cofactor. This is Glutamate decarboxylase 1 (Gad1) from Rattus norvegicus (Rat).